A 246-amino-acid polypeptide reads, in one-letter code: NAD(P)H-quinone oxidoreductase subunit K, organellar chromatophore (246 aa).

4 residues coordinate [4Fe-4S] cluster: Cys-58, Cys-59, Cys-123, and Cys-154.

It belongs to the complex I 20 kDa subunit family. As to quaternary structure, NDH-1 is composed of 14 different subunits. Subunits nuoB, C, D, E, F, and G constitute the peripheral sector of the complex. [4Fe-4S] cluster serves as cofactor.

It localises to the plastid. It is found in the organellar chromatophore thylakoid membrane. It carries out the reaction a quinone + NADH + H(+) = a quinol + NAD(+). In terms of biological role, NDH-1 shuttles electrons from NADH, via FMN and iron-sulfur (Fe-S) centers, to quinones in the respiratory chain. Couples the redox reaction to proton translocation (for every two electrons transferred, four hydrogen ions are translocated across the cytoplasmic membrane), and thus conserves the redox energy in a proton gradient. This chain is NAD(P)H-quinone oxidoreductase subunit K, organellar chromatophore, found in Paulinella chromatophora.